A 514-amino-acid polypeptide reads, in one-letter code: MEEIQRDLQLERSRQQDFLYPLIFQEYIYAFAHDRSLSRSFLSENPDSENQVYENKSSLLIVKRLITRMHKQNHFLISTNDSKKNLFLGRNKDLDSLILLEGFAFIVEIPYSLRLISSLEGKRKKIEKSQTLRSIHSIFPFLEDNFSHLNFVLDILIPYPVHAEILVQTLRYWVKDAPSLHFLRXXLNDYWSLSTPKKAGLKRNQRFFLFLYNSHVCEYESIFVFLRNQSSHLQSLSFGVLLERIYFYGKIECLGSVFLKVTDCQANLWLVKEPCMHYVRYQRKCILSSKGTSLFMNKWKCYLATFWQWHFSLWFHPRRISTNPLYNHLLEFVGYLSSARMHPAMVRSQILENSFLINNAIKKVDALIPIMPMVTSLAKAQFCNLLGHPTSKPVWADLSDSNIINRFGHICRNISHYYSGSSKKKSLYRIKYILRLSCARTLARKHKSTVRTFLKTAGSGFLEEFLMSEEDLLCWTFPKASSALWGVYKSRIWHLDIIWINDLANHKKNLRPWK.

This sequence belongs to the intron maturase 2 family. MatK subfamily.

The protein resides in the plastid. Its subcellular location is the chloroplast. Its function is as follows. Usually encoded in the trnK tRNA gene intron. Probably assists in splicing its own and other chloroplast group II introns. This Plantago argentea (Silver plantain) protein is Maturase K.